We begin with the raw amino-acid sequence, 295 residues long: GTPase Era (295 aa).

Residues 4–171 (KSGFVTIIGR…INLIVQYLPE (168 aa)) form the Era-type G domain. The G1 stretch occupies residues 12 to 19 (GRPNVGKS). 12–19 (GRPNVGKS) is a binding site for GTP. The interval 38-42 (QTTRN) is G2. The tract at residues 59–62 (DTPG) is G3. GTP-binding positions include 59–63 (DTPGI) and 121–124 (NKID). Positions 121–124 (NKID) are G4. The G5 stretch occupies residues 150–152 (ISA). Residues 194–280 (IREKILHYTD…YLELWVKVKE (87 aa)) form the KH type-2 domain.

The protein belongs to the TRAFAC class TrmE-Era-EngA-EngB-Septin-like GTPase superfamily. Era GTPase family. In terms of assembly, monomer.

The protein resides in the cytoplasm. The protein localises to the cell membrane. In terms of biological role, an essential GTPase that binds both GDP and GTP, with rapid nucleotide exchange. Plays a role in 16S rRNA processing and 30S ribosomal subunit biogenesis and possibly also in cell cycle regulation and energy metabolism. This Alkaliphilus oremlandii (strain OhILAs) (Clostridium oremlandii (strain OhILAs)) protein is GTPase Era.